Reading from the N-terminus, the 745-residue chain is Single-minded homolog 1-A (745 aa).

Residues 1-53 (MKEKSKNAGRTRREKENSEFYELAKLLPLPSAITSQSDKASIIRLTTSYLKMR) enclose the bHLH domain. PAS domains follow at residues 77-147 (GREL…QPYH) and 218-288 (PPSA…LVKG). In terms of domain architecture, Single-minded C-terminal spans 336 to 745 (EYKGLQLSLD…GTSVIITNGS (410 aa)). Over residues 350–364 (TKPSFTYNSPSNPVT) the composition is skewed to polar residues. 2 disordered regions span residues 350–413 (TKPS…LTDS) and 529–563 (EDSA…EPSK). Residues 368–387 (RVGKSRVSRTKTKTRLSPYS) carry the Nuclear localization signal motif. A compositionally biased stretch (basic residues) spans 369–381 (VGKSRVSRTKTKT). Low complexity predominate over residues 532–544 (AVSSAPDGGSASD).

As to quaternary structure, efficient DNA binding requires dimerization with another bHLH protein. Heterodimer of sim1a and arnt. As to expression, expressed in embryonic forebrain at the eleven somite stage. Detected in brain throughout embryonic development.

The protein resides in the nucleus. In terms of biological role, transcriptional factor that may have pleiotropic effects during embryogenesis and in the adult. The sequence is that of Single-minded homolog 1-A (sim1a) from Danio rerio (Zebrafish).